A 179-amino-acid polypeptide reads, in one-letter code: Ribosome maturation factor RimM (179 aa).

Residues 101–179 (EGEVYVHDLC…VELMHRWILE (79 aa)) enclose the PRC barrel domain.

Belongs to the RimM family. Binds ribosomal protein uS19.

The protein resides in the cytoplasm. An accessory protein needed during the final step in the assembly of 30S ribosomal subunit, possibly for assembly of the head region. Essential for efficient processing of 16S rRNA. May be needed both before and after RbfA during the maturation of 16S rRNA. It has affinity for free ribosomal 30S subunits but not for 70S ribosomes. The protein is Ribosome maturation factor RimM of Treponema denticola (strain ATCC 35405 / DSM 14222 / CIP 103919 / JCM 8153 / KCTC 15104).